The primary structure comprises 317 residues: Ret finger protein-like 1 (317 aa).

The RING-type zinc finger occupies 40-82 (CPVCSDYLEKPMSLECGCAVCFKCINSLQKEPHGEDLLCCCCS). The B30.2/SPRY domain maps to 107 to 301 (EPKLKKILQM…DKSVLSICPV (195 aa)).

Phosphorylated by PKC and CDK1. The antiproliferative effect seems to be positively regulated by PKC phosphorylation and negatively by CDK1 phosphorylation. In terms of tissue distribution, seems to be expressed in prostate and less abundantly in adult brain, fetal liver, and fetal kidney.

The protein localises to the cytoplasm. The protein resides in the nucleus. Functionally, negatively regulates the G2-M phase transition, possibly by promoting cyclin B1/CCNB1 and CDK1 proteasomal degradation and thereby preventing their accumulation during interphase. The protein is Ret finger protein-like 1 (RFPL1) of Homo sapiens (Human).